We begin with the raw amino-acid sequence, 326 residues long: Undecaprenyl-phosphate 4-deoxy-4-formamido-L-arabinose transferase (326 aa).

The next 2 helical transmembrane spans lie at 236–256 (LSVV…LLIV) and 270–290 (VFTL…AMGL).

Belongs to the glycosyltransferase 2 family.

The protein resides in the cell inner membrane. It catalyses the reaction UDP-4-deoxy-4-formamido-beta-L-arabinose + di-trans,octa-cis-undecaprenyl phosphate = 4-deoxy-4-formamido-alpha-L-arabinopyranosyl di-trans,octa-cis-undecaprenyl phosphate + UDP. Its pathway is glycolipid biosynthesis; 4-amino-4-deoxy-alpha-L-arabinose undecaprenyl phosphate biosynthesis; 4-amino-4-deoxy-alpha-L-arabinose undecaprenyl phosphate from UDP-4-deoxy-4-formamido-beta-L-arabinose and undecaprenyl phosphate: step 1/2. The protein operates within bacterial outer membrane biogenesis; lipopolysaccharide biosynthesis. In terms of biological role, catalyzes the transfer of 4-deoxy-4-formamido-L-arabinose from UDP to undecaprenyl phosphate. The modified arabinose is attached to lipid A and is required for resistance to polymyxin and cationic antimicrobial peptides. This Proteus mirabilis (strain HI4320) protein is Undecaprenyl-phosphate 4-deoxy-4-formamido-L-arabinose transferase.